A 392-amino-acid polypeptide reads, in one-letter code: Alanine--glyoxylate aminotransferase (392 aa).

N6-(pyridoxal phosphate)lysine is present on K209. K225 is modified (N6-acetyllysine; alternate). An N6-succinyllysine; alternate modification is found at K225. N6-acetyllysine occurs at positions 234 and 312. Residue R360 coordinates substrate. A Microbody targeting signal motif is present at residues 390-392 (SQL).

The protein belongs to the class-V pyridoxal-phosphate-dependent aminotransferase family. In terms of assembly, homodimer. It depends on pyridoxal 5'-phosphate as a cofactor.

The protein resides in the peroxisome. The catalysed reaction is L-serine + pyruvate = 3-hydroxypyruvate + L-alanine. It carries out the reaction glyoxylate + L-alanine = glycine + pyruvate. Its function is as follows. Peroxisomal aminotransferase that catalyzes the transamination of glyoxylate to glycine and contributes to the glyoxylate detoxification. Also catalyzes the transamination between L-serine and pyruvate and contributes to gluconeogenesis from the L-serine metabolism. The protein is Alanine--glyoxylate aminotransferase of Oryctolagus cuniculus (Rabbit).